Here is a 122-residue protein sequence, read N- to C-terminus: Large ribosomal subunit protein uL14 (122 aa).

Belongs to the universal ribosomal protein uL14 family. As to quaternary structure, part of the 50S ribosomal subunit. Forms a cluster with proteins L3 and L19. In the 70S ribosome, L14 and L19 interact and together make contacts with the 16S rRNA in bridges B5 and B8.

In terms of biological role, binds to 23S rRNA. Forms part of two intersubunit bridges in the 70S ribosome. This Corynebacterium efficiens (strain DSM 44549 / YS-314 / AJ 12310 / JCM 11189 / NBRC 100395) protein is Large ribosomal subunit protein uL14.